The following is a 206-amino-acid chain: uncharacterized protein (206 aa).

Residues 1–22 (MPKLRLIGLTLLALSATAVSHA) form the signal peptide. Residues 23-89 (EETRYVSDEL…IPLKQLSTEP (67 aa)) enclose the SH3b domain. A helical transmembrane segment spans residues 169-191 (IIMQWFMYGGGVLGLGLLLGLVL).

The protein to H.influenzae HI_1605.

Its subcellular location is the membrane. This is an uncharacterized protein from Escherichia coli O157:H7.